Here is a 72-residue protein sequence, read N- to C-terminus: MKQDIHPKYTKVTVTCANCGKDFETRSTRSSIKVDICSNCHPFYTGKQVLVDTAGRVERFKKRFAKATSQSK.

It belongs to the bacterial ribosomal protein bL31 family. Type A subfamily. As to quaternary structure, part of the 50S ribosomal subunit.

Its function is as follows. Binds the 23S rRNA. The chain is Large ribosomal subunit protein bL31 from Prosthecochloris aestuarii (strain DSM 271 / SK 413).